We begin with the raw amino-acid sequence, 131 residues long: uncharacterized protein (131 aa).

Residues 31–40 show a composition bias toward low complexity; sequence AAATSRAAPL. Residues 31–131 are disordered; it reads AAATSRAAPL…EAKTEQTKTP (101 aa).

This is an uncharacterized protein from Homo sapiens (Human).